Consider the following 434-residue polypeptide: Glutamate-1-semialdehyde 2,1-aminomutase (434 aa).

Lys267 carries the N6-(pyridoxal phosphate)lysine modification.

The protein belongs to the class-III pyridoxal-phosphate-dependent aminotransferase family. HemL subfamily. As to quaternary structure, homodimer. Requires pyridoxal 5'-phosphate as cofactor.

It localises to the cytoplasm. It carries out the reaction (S)-4-amino-5-oxopentanoate = 5-aminolevulinate. The protein operates within porphyrin-containing compound metabolism; protoporphyrin-IX biosynthesis; 5-aminolevulinate from L-glutamyl-tRNA(Glu): step 2/2. It participates in porphyrin-containing compound metabolism; chlorophyll biosynthesis. This Roseiflexus castenholzii (strain DSM 13941 / HLO8) protein is Glutamate-1-semialdehyde 2,1-aminomutase.